Here is a 419-residue protein sequence, read N- to C-terminus: UDP-N-acetylglucosamine 1-carboxyvinyltransferase (419 aa).

22–23 contributes to the phosphoenolpyruvate binding site; it reads KN. Arginine 91 lines the UDP-N-acetyl-alpha-D-glucosamine pocket. Cysteine 115 acts as the Proton donor in catalysis. Cysteine 115 is modified (2-(S-cysteinyl)pyruvic acid O-phosphothioketal). UDP-N-acetyl-alpha-D-glucosamine-binding positions include 120–124, 160–163, aspartate 305, and valine 327; these read RPVDL and KVSV.

Belongs to the EPSP synthase family. MurA subfamily.

The protein localises to the cytoplasm. The enzyme catalyses phosphoenolpyruvate + UDP-N-acetyl-alpha-D-glucosamine = UDP-N-acetyl-3-O-(1-carboxyvinyl)-alpha-D-glucosamine + phosphate. The protein operates within cell wall biogenesis; peptidoglycan biosynthesis. Functionally, cell wall formation. Adds enolpyruvyl to UDP-N-acetylglucosamine. The protein is UDP-N-acetylglucosamine 1-carboxyvinyltransferase of Escherichia coli O157:H7.